The primary structure comprises 129 residues: Large ribosomal subunit protein uL22 (129 aa).

The protein belongs to the universal ribosomal protein uL22 family. As to quaternary structure, part of the 50S ribosomal subunit.

In terms of biological role, this protein binds specifically to 23S rRNA; its binding is stimulated by other ribosomal proteins, e.g. L4, L17, and L20. It is important during the early stages of 50S assembly. It makes multiple contacts with different domains of the 23S rRNA in the assembled 50S subunit and ribosome. Functionally, the globular domain of the protein is located near the polypeptide exit tunnel on the outside of the subunit, while an extended beta-hairpin is found that lines the wall of the exit tunnel in the center of the 70S ribosome. In Bartonella henselae (strain ATCC 49882 / DSM 28221 / CCUG 30454 / Houston 1) (Rochalimaea henselae), this protein is Large ribosomal subunit protein uL22.